Reading from the N-terminus, the 566-residue chain is Zinc finger protein 704 (566 aa).

Disordered regions lie at residues Met1–Ala148, Asp166–Glu203, and Pro253–Asp324. Residues Leu12–Gly31 show a composition bias toward low complexity. Positions Leu32–Gly55 are enriched in pro residues. Residues Thr56–Leu72 show a composition bias toward low complexity. A compositionally biased stretch (basic and acidic residues) spans Arg91–Ala100. A compositionally biased stretch (acidic residues) spans Glu101–Glu128. Basic and acidic residues predominate over residues Glu186–Glu203. Low complexity predominate over residues Ser267 to Ser290. The segment at Phe346–His371 adopts a C2H2-type zinc-finger fold. A phosphoserine mark is found at Ser378 and Ser381. Disordered regions lie at residues Val409 to Thr436 and Pro497 to Glu535. A sufficient for binding to RE2 sequence motifs region spans residues Gly471–Asp566. Residues Lys537–Lys541 carry the CR1 motif. Positions Cys555 to Lys559 match the CR2 motif.

The protein localises to the nucleus. Its function is as follows. Transcription factor which binds to RE2 sequence elements in the MYOD1 enhancer. The protein is Zinc finger protein 704 of Mus musculus (Mouse).